The primary structure comprises 369 residues: Probable N-acetyltransferase 16 (369 aa).

The disordered stretch occupies residues 1–49 (MKLEASCGTATSEVPKPEKKTARDAEPSSETRPQEVEAEPRSGSGPEAE). Residues 15–26 (PKPEKKTARDAE) are compositionally biased toward basic and acidic residues. Positions 53-188 (LDFVVATERE…QGILLVRFNA (136 aa)) constitute an N-acetyltransferase domain.

In terms of biological role, probable N-acetyltransferase. Shows only trace activity toward L-His and no N-acetyltransferase activity toward other amino acids. The physiological substrate of this enzyme is unknown. This is Probable N-acetyltransferase 16 (NAT16) from Homo sapiens (Human).